We begin with the raw amino-acid sequence, 234 residues long: DNA repair protein RecO (234 aa).

This sequence belongs to the RecO family.

Its function is as follows. Involved in DNA repair and RecF pathway recombination. The protein is DNA repair protein RecO of Idiomarina loihiensis (strain ATCC BAA-735 / DSM 15497 / L2-TR).